Here is a 235-residue protein sequence, read N- to C-terminus: uncharacterized protein (235 aa).

Positions 1 to 24 (MSDRMKLKGLLAFCLLFLSSFVLA) are cleaved as a signal peptide.

This is an uncharacterized protein from Haemophilus influenzae (strain ATCC 51907 / DSM 11121 / KW20 / Rd).